A 396-amino-acid polypeptide reads, in one-letter code: Phosphoglycerate kinase (396 aa).

Substrate contacts are provided by residues 22 to 24 (DLN), arginine 37, 60 to 63 (HFGR), arginine 118, and arginine 151. Residues lysine 201, glutamate 323, and 353–356 (GGDT) contribute to the ATP site.

Belongs to the phosphoglycerate kinase family. In terms of assembly, monomer.

The protein localises to the cytoplasm. The enzyme catalyses (2R)-3-phosphoglycerate + ATP = (2R)-3-phospho-glyceroyl phosphate + ADP. The protein operates within carbohydrate degradation; glycolysis; pyruvate from D-glyceraldehyde 3-phosphate: step 2/5. The protein is Phosphoglycerate kinase of Xanthobacter autotrophicus (strain ATCC BAA-1158 / Py2).